Consider the following 150-residue polypeptide: Large ribosomal subunit protein bL9 (150 aa).

The protein belongs to the bacterial ribosomal protein bL9 family.

In terms of biological role, binds to the 23S rRNA. The polypeptide is Large ribosomal subunit protein bL9 (Leuconostoc citreum (strain KM20)).